Reading from the N-terminus, the 66-residue chain is Large ribosomal subunit protein uL29 (66 aa).

It belongs to the universal ribosomal protein uL29 family.

The protein is Large ribosomal subunit protein uL29 of Sinorhizobium fredii (strain NBRC 101917 / NGR234).